Here is a 581-residue protein sequence, read N- to C-terminus: Proline--tRNA ligase (581 aa).

It belongs to the class-II aminoacyl-tRNA synthetase family. ProS type 1 subfamily. In terms of assembly, homodimer.

It localises to the cytoplasm. It carries out the reaction tRNA(Pro) + L-proline + ATP = L-prolyl-tRNA(Pro) + AMP + diphosphate. Its function is as follows. Catalyzes the attachment of proline to tRNA(Pro) in a two-step reaction: proline is first activated by ATP to form Pro-AMP and then transferred to the acceptor end of tRNA(Pro). As ProRS can inadvertently accommodate and process non-cognate amino acids such as alanine and cysteine, to avoid such errors it has two additional distinct editing activities against alanine. One activity is designated as 'pretransfer' editing and involves the tRNA(Pro)-independent hydrolysis of activated Ala-AMP. The other activity is designated 'posttransfer' editing and involves deacylation of mischarged Ala-tRNA(Pro). The misacylated Cys-tRNA(Pro) is not edited by ProRS. The protein is Proline--tRNA ligase of Azoarcus sp. (strain BH72).